Here is a 126-residue protein sequence, read N- to C-terminus: uncharacterized protein (126 aa).

Disordered stretches follow at residues 15-72 and 93-126; these read PEWG…SDPQ and TQIP…TTSN. Composition is skewed to basic and acidic residues over residues 29–46 and 55–64; these read DPLD…RVPE and VQEDSREHGQ.

This is an uncharacterized protein from Homo sapiens (Human).